The sequence spans 835 residues: Protein translocase subunit SecA (835 aa).

ATP-binding positions include Gln85, 103–107, and Asp492; that span reads GEGKT. The disordered stretch occupies residues 788–807; that stretch reads VQGEAVHPSSDGEEAKKKPV. Positions 819, 821, 830, and 831 each coordinate Zn(2+).

Belongs to the SecA family. Monomer and homodimer. Part of the essential Sec protein translocation apparatus which comprises SecA, SecYEG and auxiliary proteins SecDF. Other proteins may also be involved. It depends on Zn(2+) as a cofactor.

The protein resides in the cell membrane. Its subcellular location is the cytoplasm. It carries out the reaction ATP + H2O + cellular proteinSide 1 = ADP + phosphate + cellular proteinSide 2.. Functionally, part of the Sec protein translocase complex. Interacts with the SecYEG preprotein conducting channel. Has a central role in coupling the hydrolysis of ATP to the transfer of proteins into and across the cell membrane, serving as an ATP-driven molecular motor driving the stepwise translocation of polypeptide chains across the membrane. The protein is Protein translocase subunit SecA of Bacillus cereus (strain B4264).